Reading from the N-terminus, the 158-residue chain is Protein Smg homolog (158 aa).

This sequence belongs to the Smg family.

The polypeptide is Protein Smg homolog (Shewanella sp. (strain MR-4)).